Consider the following 87-residue polypeptide: UPF0367 protein Pro_0144 (87 aa).

The protein belongs to the UPF0367 family.

The chain is UPF0367 protein Pro_0144 from Prochlorococcus marinus (strain SARG / CCMP1375 / SS120).